The following is a 327-amino-acid chain: L-lactate dehydrogenase (327 aa).

Residues valine 18, aspartate 39, lysine 44, tyrosine 69, and 83 to 84 contribute to the NAD(+) site; that span reads GA. Substrate contacts are provided by residues glutamine 86, arginine 92, and 124–127; that span reads NPVD. NAD(+) contacts are provided by residues 122-124 and serine 147; that span reads AAN. Substrate is bound at residue 152–155; it reads DSAR. Arginine 157 and histidine 172 together coordinate beta-D-fructose 1,6-bisphosphate. Residue histidine 179 is the Proton acceptor of the active site. Residue tyrosine 224 is modified to Phosphotyrosine. Substrate is bound at residue threonine 233.

It belongs to the LDH/MDH superfamily. LDH family. As to quaternary structure, homotetramer.

It is found in the cytoplasm. It catalyses the reaction (S)-lactate + NAD(+) = pyruvate + NADH + H(+). Its pathway is fermentation; pyruvate fermentation to lactate; (S)-lactate from pyruvate: step 1/1. With respect to regulation, allosterically activated by fructose 1,6-bisphosphate (FBP). In terms of biological role, catalyzes the conversion of lactate to pyruvate. The sequence is that of L-lactate dehydrogenase from Streptococcus pyogenes serotype M3 (strain SSI-1).